The following is a 356-amino-acid chain: DNA polymerase IV (356 aa).

The UmuC domain maps to 1 to 188; it reads MDTSRKIIHI…IPVTKFYGVG (188 aa). Positions 11 and 106 each coordinate Mg(2+). Glutamate 107 is an active-site residue.

Belongs to the DNA polymerase type-Y family. Monomer. Mg(2+) is required as a cofactor.

The protein resides in the cytoplasm. It catalyses the reaction DNA(n) + a 2'-deoxyribonucleoside 5'-triphosphate = DNA(n+1) + diphosphate. Poorly processive, error-prone DNA polymerase involved in untargeted mutagenesis. Copies undamaged DNA at stalled replication forks, which arise in vivo from mismatched or misaligned primer ends. These misaligned primers can be extended by PolIV. Exhibits no 3'-5' exonuclease (proofreading) activity. May be involved in translesional synthesis, in conjunction with the beta clamp from PolIII. The chain is DNA polymerase IV from Listeria innocua serovar 6a (strain ATCC BAA-680 / CLIP 11262).